A 948-amino-acid polypeptide reads, in one-letter code: Bifunctional glutamine synthetase adenylyltransferase/adenylyl-removing enzyme (948 aa).

Residues 1–444 form an adenylyl removase region; the sequence is MSLPSALLPT…VFATLIGEED (444 aa). The interval 452 to 948 is adenylyl transferase; the sequence is ARHFHELWDM…VIQAWQQWLG (497 aa).

The protein belongs to the GlnE family. The cofactor is Mg(2+).

It carries out the reaction [glutamine synthetase]-O(4)-(5'-adenylyl)-L-tyrosine + phosphate = [glutamine synthetase]-L-tyrosine + ADP. The catalysed reaction is [glutamine synthetase]-L-tyrosine + ATP = [glutamine synthetase]-O(4)-(5'-adenylyl)-L-tyrosine + diphosphate. Involved in the regulation of glutamine synthetase GlnA, a key enzyme in the process to assimilate ammonia. When cellular nitrogen levels are high, the C-terminal adenylyl transferase (AT) inactivates GlnA by covalent transfer of an adenylyl group from ATP to specific tyrosine residue of GlnA, thus reducing its activity. Conversely, when nitrogen levels are low, the N-terminal adenylyl removase (AR) activates GlnA by removing the adenylyl group by phosphorolysis, increasing its activity. The regulatory region of GlnE binds the signal transduction protein PII (GlnB) which indicates the nitrogen status of the cell. This is Bifunctional glutamine synthetase adenylyltransferase/adenylyl-removing enzyme from Vibrio cholerae serotype O1 (strain ATCC 39315 / El Tor Inaba N16961).